Consider the following 235-residue polypeptide: Modulator of macroautophagy TMEM150B (235 aa).

Topologically, residues 1-8 (MWGYLSLL) are cytoplasmic. The helical transmembrane segment at 9–29 (PMCLAFWAIAGIWTVFSLAVV) threads the bilayer. At 30 to 51 (NKAVNLTDGFPYISVCGNVPPQ) the chain is on the extracellular side. N-linked (GlcNAc...) asparagine glycosylation is present at N34. The chain crosses the membrane as a helical span at residues 52–72 (SCIFSQVLNIGAASAAWICIL). The Cytoplasmic segment spans residues 73–88 (RYYQLRDWGVRKWHNQ). A helical membrane pass occupies residues 89 to 109 (VILWTGLLCALGTSIVGNFQE). Over 110-116 (KNQRATH) the chain is Extracellular. The helical transmembrane segment at 117–137 (LTGAFLAFFVGIVYFWLQLFL) threads the bilayer. The Cytoplasmic portion of the chain corresponds to 138–156 (SWRMKNLPQPGAPWIGPLR). Residues 157-177 (LVLCSACFILEVAMVVLHSWS) form a helical membrane-spanning segment. Residues 178–180 (MRS) lie on the Extracellular side of the membrane. A helical transmembrane segment spans residues 181–201 (VSAICEWVAAMLLFILFGLLA). At 202–235 (VDFSRLDSCTLCLQPGSGSLRPPPDSPTSLHVQL) the chain is on the cytoplasmic side.

It belongs to the DRAM/TMEM150 family.

It localises to the cell membrane. It is found in the endosome membrane. The protein localises to the cytoplasmic vesicle. Its subcellular location is the autophagosome membrane. Functionally, modulator of macroautophagy that causes accumulation of autophagosomes under basal conditions and enhances autophagic flux. Represses cell death and promotes long-term clonogenic survival of cells grown in the absence of glucose in a macroautophagy-independent manner. May have some role in extracellular matrix engulfment or growth factor receptor recycling, both of which can modulate cell survival. The protein is Modulator of macroautophagy TMEM150B of Bos taurus (Bovine).